We begin with the raw amino-acid sequence, 301 residues long: HTH-type transcriptional regulator MtrA (301 aa).

An HTH araC/xylS-type domain is found at 196-297; sequence KRLGHLIQKV…HVSPGQYRKE (102 aa). 2 consecutive DNA-binding regions (H-T-H motif) follow at residues 216–237 and 264–287; these read DKMV…KSQV and VLEV…KRQY.

Its activity is regulated as follows. The affinity for the mtrCDE promoter increases 2-fold in the presence of TX-100, a known effector and substrate of the MtrCDE pump. In terms of biological role, involved in the induction of the mtrCDE-encoded efflux pump. Binds specifically to the mtrCDE promoter region. Required for high-level inducible resistance to the detergent Triton X-100 (TX-100) and the spermicide nonoxynol-9 (N-9). In Neisseria gonorrhoeae, this protein is HTH-type transcriptional regulator MtrA.